The sequence spans 1171 residues: ATP-dependent helicase/deoxyribonuclease subunit B (1171 aa).

The 343-residue stretch at Met-1–Arg-343 folds into the UvrD-like helicase ATP-binding domain. Gly-8 to Ser-15 provides a ligand contact to ATP. Residues Met-281–Asp-587 form the UvrD-like helicase C-terminal domain. Cys-805, Cys-1129, Cys-1132, and Cys-1138 together coordinate [4Fe-4S] cluster.

It belongs to the helicase family. AddB/RexB type 1 subfamily. As to quaternary structure, heterodimer of AddA and AddB. Mg(2+) is required as a cofactor. Requires [4Fe-4S] cluster as cofactor.

Its function is as follows. The heterodimer acts as both an ATP-dependent DNA helicase and an ATP-dependent, dual-direction single-stranded exonuclease. Recognizes the chi site generating a DNA molecule suitable for the initiation of homologous recombination. The AddB subunit has 5' -&gt; 3' nuclease activity but not helicase activity. The chain is ATP-dependent helicase/deoxyribonuclease subunit B from Bacillus cereus (strain AH187).